Reading from the N-terminus, the 79-residue chain is RNA-binding protein KhpA (79 aa).

The KH domain maps to 30-79 (GRVLEVRVHPDDLGKVIGRNGRTARALRTVVGAIGGRGVRVDLVDVDHVR).

It belongs to the KhpA RNA-binding protein family.

It localises to the cytoplasm. Its subcellular location is the nucleoid. Functionally, a probable RNA-binding protein. This chain is RNA-binding protein KhpA, found in Streptomyces coelicolor (strain ATCC BAA-471 / A3(2) / M145).